The primary structure comprises 254 residues: Segregation and condensation protein A (254 aa).

This sequence belongs to the ScpA family. Component of a cohesin-like complex composed of ScpA, ScpB and the Smc homodimer, in which ScpA and ScpB bind to the head domain of Smc. The presence of the three proteins is required for the association of the complex with DNA.

It localises to the cytoplasm. Functionally, participates in chromosomal partition during cell division. May act via the formation of a condensin-like complex containing Smc and ScpB that pull DNA away from mid-cell into both cell halves. In Clostridium tetani (strain Massachusetts / E88), this protein is Segregation and condensation protein A.